The primary structure comprises 347 residues: NADH-ubiquinone oxidoreductase chain 2 (347 aa).

The next 10 helical transmembrane spans lie at 3 to 23 (PIIY…VMIS), 25 to 45 (HWLL…PVLM), 59 to 79 (YFLT…INLL), 89 to 109 (MFNP…LGLS), 149 to 169 (INPN…GWGG), 178 to 198 (IMAY…PYNT), 200 to 220 (MTIL…MLLI), 237 to 257 (MPVI…LPPL), 274 to 294 (ESII…YFYM), and 325 to 345 (LLPT…ALSS).

Belongs to the complex I subunit 2 family. In terms of assembly, core subunit of respiratory chain NADH dehydrogenase (Complex I) which is composed of 45 different subunits. Interacts with TMEM242.

Its subcellular location is the mitochondrion inner membrane. The enzyme catalyses a ubiquinone + NADH + 5 H(+)(in) = a ubiquinol + NAD(+) + 4 H(+)(out). Its function is as follows. Core subunit of the mitochondrial membrane respiratory chain NADH dehydrogenase (Complex I) which catalyzes electron transfer from NADH through the respiratory chain, using ubiquinone as an electron acceptor. Essential for the catalytic activity and assembly of complex I. The polypeptide is NADH-ubiquinone oxidoreductase chain 2 (Sus scrofa (Pig)).